The primary structure comprises 185 residues: Elongation factor P (185 aa).

Belongs to the elongation factor P family.

It is found in the cytoplasm. It participates in protein biosynthesis; polypeptide chain elongation. Functionally, involved in peptide bond synthesis. Stimulates efficient translation and peptide-bond synthesis on native or reconstituted 70S ribosomes in vitro. Probably functions indirectly by altering the affinity of the ribosome for aminoacyl-tRNA, thus increasing their reactivity as acceptors for peptidyl transferase. This chain is Elongation factor P, found in Nitratidesulfovibrio vulgaris (strain DP4) (Desulfovibrio vulgaris).